The chain runs to 482 residues: Glycogen synthase (482 aa).

ADP-alpha-D-glucose is bound at residue K15.

Belongs to the glycosyltransferase 1 family. Bacterial/plant glycogen synthase subfamily.

It carries out the reaction [(1-&gt;4)-alpha-D-glucosyl](n) + ADP-alpha-D-glucose = [(1-&gt;4)-alpha-D-glucosyl](n+1) + ADP + H(+). It participates in glycan biosynthesis; glycogen biosynthesis. Its function is as follows. Synthesizes alpha-1,4-glucan chains using ADP-glucose. The sequence is that of Glycogen synthase from Elusimicrobium minutum (strain Pei191).